We begin with the raw amino-acid sequence, 140 residues long: Protein archease (140 aa).

Residues D11, D139, and L140 each contribute to the Ca(2+) site.

It belongs to the archease family.

In terms of biological role, activates the tRNA-splicing ligase complex by facilitating the enzymatic turnover of catalytic subunit RtcB. Acts by promoting the guanylylation of RtcB, a key intermediate step in tRNA ligation. Can also alter the NTP specificity of RtcB such that ATP, dGTP or ITP is used efficiently. The protein is Protein archease of Methanopyrus kandleri (strain AV19 / DSM 6324 / JCM 9639 / NBRC 100938).